The primary structure comprises 117 residues: NADH-ubiquinone oxidoreductase chain 3 (117 aa).

3 consecutive transmembrane segments (helical) span residues Ile4–Ile24, Ile60–Ile80, and Ile86–His106.

It belongs to the complex I subunit 3 family.

Its subcellular location is the mitochondrion membrane. The enzyme catalyses a ubiquinone + NADH + 5 H(+)(in) = a ubiquinol + NAD(+) + 4 H(+)(out). Core subunit of the mitochondrial membrane respiratory chain NADH dehydrogenase (Complex I) that is believed to belong to the minimal assembly required for catalysis. Complex I functions in the transfer of electrons from NADH to the respiratory chain. The immediate electron acceptor for the enzyme is believed to be ubiquinone. This is NADH-ubiquinone oxidoreductase chain 3 (mt:ND3) from Drosophila yakuba (Fruit fly).